The following is a 435-amino-acid chain: Gamma-glutamyl phosphate reductase (435 aa).

The protein belongs to the gamma-glutamyl phosphate reductase family.

The protein localises to the cytoplasm. It carries out the reaction L-glutamate 5-semialdehyde + phosphate + NADP(+) = L-glutamyl 5-phosphate + NADPH + H(+). The protein operates within amino-acid biosynthesis; L-proline biosynthesis; L-glutamate 5-semialdehyde from L-glutamate: step 2/2. Catalyzes the NADPH-dependent reduction of L-glutamate 5-phosphate into L-glutamate 5-semialdehyde and phosphate. The product spontaneously undergoes cyclization to form 1-pyrroline-5-carboxylate. This Bradyrhizobium diazoefficiens (strain JCM 10833 / BCRC 13528 / IAM 13628 / NBRC 14792 / USDA 110) protein is Gamma-glutamyl phosphate reductase.